Reading from the N-terminus, the 261-residue chain is Carbonic anhydrase 1 (261 aa).

The interval 1–31 (MASPDWGYDDKNGPEQWSKLYPIANGNNQSP) is disordered. Ala2 is subject to N-acetylalanine. An Alpha-carbonic anhydrase domain is found at 4–261 (PDWGYDDKNG…LKGRTVRASF (258 aa)). His65 acts as the Proton donor/acceptor in catalysis. Zn(2+) is bound by residues His65, His68, His95, His97, and His120. Substrate contacts are provided by residues Thr200 and 200–201 (TH). His201 serves as a coordination point for Zn(2+). Residues 241–261 (PMQHNNRPTQPLKGRTVRASF) are disordered.

It belongs to the alpha-carbonic anhydrase family. Requires Zn(2+) as cofactor.

The protein resides in the cytoplasm. The catalysed reaction is hydrogencarbonate + H(+) = CO2 + H2O. The enzyme catalyses urea = cyanamide + H2O. Its activity is regulated as follows. Activated by histamine, imidazole, L-adrenaline, L- and D-histidine, and L- and D-phenylalanine. Inhibited by coumarins, sulfonamide derivatives such as acetazolamide, benzenesulfonamide and derivatives (4-carboxyethylbenzene-sulfonamide, 4-carboxyethylbenzene-sulfonamide ethyl ester, 4-(acetyl-2-aminoethyl)benzene-sulfonamide, 4-aminoethylbenzene-sulfonamide), and 'prong inhibitors' BR15, BR17, BR22 and BR30. Activated by a short exposition to Foscarnet (phosphonoformate trisodium salt), but inhibited by a long one. Esterase activity weakly reduced by cyanamide. In terms of biological role, catalyzes the reversible hydration of carbon dioxide. Can hydrate cyanamide to urea. The polypeptide is Carbonic anhydrase 1 (CA1) (Homo sapiens (Human)).